Reading from the N-terminus, the 246-residue chain is MyoD family inhibitor (246 aa).

2 disordered regions span residues 1–76 (MYQV…LDST) and 91–151 (GNPL…SKST). The span at 14–26 (APYGAPSAAPGPA) shows a compositional bias: low complexity. The MDFI domain maps to 99–246 (LLPNDSGHPS…MECCGLCFSS (148 aa)).

It belongs to the MDFI family. Interacts (via C-terminus) with AXIN1 and LEF1. Interacts with CCNT2. Interacts (via C-terminus) with Piezo channel composed of PIEZO1 or PIEZO2; the interaction prolongs Piezo channel inactivation.

It localises to the nucleus. The protein localises to the cytoplasm. In terms of biological role, inhibits the transactivation activity of the Myod family of myogenic factors and represses myogenesis. Acts by associating with Myod family members and retaining them in the cytoplasm by masking their nuclear localization signals. Can also interfere with the DNA-binding activity of Myod family members. Plays an important role in trophoblast and chondrogenic differentiation. Regulates the transcriptional activity of TCF7L1/TCF3 by interacting directly with TCF7L1/TCF3 and preventing it from binding DNA. Binds to the axin complex, resulting in an increase in the level of free beta-catenin. Affects axin regulation of the WNT and JNK signaling pathways. Regulates the activity of mechanosensitive Piezo channel. This Homo sapiens (Human) protein is MyoD family inhibitor (MDFI).